The sequence spans 129 residues: MRHYEIVFMVHPDQSEQVPGMIERYTGAITTAGGTIHRMEDWGRRQLAYPIDKLHKAHYVLMNVEAEQAVIDELETNFRFNDAVIRNMIMRTKHAVTEVSPMAKAKEERFVRRDDERREDTVEAASSEE.

The span at 110–121 (FVRRDDERREDT) shows a compositional bias: basic and acidic residues. The segment at 110–129 (FVRRDDERREDTVEAASSEE) is disordered.

This sequence belongs to the bacterial ribosomal protein bS6 family.

In terms of biological role, binds together with bS18 to 16S ribosomal RNA. The sequence is that of Small ribosomal subunit protein bS6 from Aeromonas salmonicida (strain A449).